The sequence spans 141 residues: Hemoglobin subunit alpha-1/2 (141 aa).

A Globin domain is found at 1–141 (VLSPADKTNV…VSTVLTSKYR (141 aa)). Ser-3 is modified (phosphoserine). Position 7 is an N6-succinyllysine (Lys-7). The residue at position 8 (Thr-8) is a Phosphothreonine. The residue at position 11 (Lys-11) is an N6-succinyllysine. Lys-16 bears the N6-acetyllysine; alternate mark. Lys-16 is subject to N6-succinyllysine; alternate. Tyr-24 carries the post-translational modification Phosphotyrosine. Lys-40 carries the post-translational modification N6-succinyllysine. Ser-49 is subject to Phosphoserine. His-58 lines the O2 pocket. His-87 contributes to the heme b binding site. Ser-102 carries the post-translational modification Phosphoserine. Thr-108 is modified (phosphothreonine). Ser-124 is modified (phosphoserine). A phosphothreonine mark is found at Thr-134 and Thr-137. Ser-138 carries the post-translational modification Phosphoserine.

The protein belongs to the globin family. As to quaternary structure, heterotetramer of two alpha chains and two beta chains. Red blood cells.

Involved in oxygen transport from the lung to the various peripheral tissues. The chain is Hemoglobin subunit alpha-1/2 from Leptonychotes weddellii (Weddell seal).